A 255-amino-acid polypeptide reads, in one-letter code: Segregation and condensation protein A (255 aa).

Belongs to the ScpA family. Component of a cohesin-like complex composed of ScpA, ScpB and the Smc homodimer, in which ScpA and ScpB bind to the head domain of Smc. The presence of the three proteins is required for the association of the complex with DNA.

It localises to the cytoplasm. Functionally, participates in chromosomal partition during cell division. May act via the formation of a condensin-like complex containing Smc and ScpB that pull DNA away from mid-cell into both cell halves. The protein is Segregation and condensation protein A of Lactiplantibacillus plantarum (strain ATCC BAA-793 / NCIMB 8826 / WCFS1) (Lactobacillus plantarum).